We begin with the raw amino-acid sequence, 265 residues long: NAD kinase (265 aa).

The Proton acceptor role is filled by D45. NAD(+) is bound by residues 45–46, 122–123, R148, D150, 161–166, and A185; these read DG, NE, and TAYSKS.

This sequence belongs to the NAD kinase family. Requires a divalent metal cation as cofactor.

Its subcellular location is the cytoplasm. The catalysed reaction is NAD(+) + ATP = ADP + NADP(+) + H(+). Functionally, involved in the regulation of the intracellular balance of NAD and NADP, and is a key enzyme in the biosynthesis of NADP. Catalyzes specifically the phosphorylation on 2'-hydroxyl of the adenosine moiety of NAD to yield NADP. The protein is NAD kinase of Lactobacillus delbrueckii subsp. bulgaricus (strain ATCC 11842 / DSM 20081 / BCRC 10696 / JCM 1002 / NBRC 13953 / NCIMB 11778 / NCTC 12712 / WDCM 00102 / Lb 14).